The primary structure comprises 412 residues: Imidazolonepropionase (412 aa).

Residues histidine 76 and histidine 78 each contribute to the Fe(3+) site. Zn(2+) is bound by residues histidine 76 and histidine 78. Arginine 85, tyrosine 148, and histidine 181 together coordinate 4-imidazolone-5-propanoate. Tyrosine 148 lines the N-formimidoyl-L-glutamate pocket. Position 242 (histidine 242) interacts with Fe(3+). Histidine 242 serves as a coordination point for Zn(2+). Glutamate 245 contributes to the 4-imidazolone-5-propanoate binding site. Aspartate 317 serves as a coordination point for Fe(3+). Position 317 (aspartate 317) interacts with Zn(2+). Residues asparagine 319 and glycine 321 each contribute to the N-formimidoyl-L-glutamate site. Serine 322 contributes to the 4-imidazolone-5-propanoate binding site.

This sequence belongs to the metallo-dependent hydrolases superfamily. HutI family. The cofactor is Zn(2+). Fe(3+) is required as a cofactor.

Its subcellular location is the cytoplasm. The catalysed reaction is 4-imidazolone-5-propanoate + H2O = N-formimidoyl-L-glutamate. It functions in the pathway amino-acid degradation; L-histidine degradation into L-glutamate; N-formimidoyl-L-glutamate from L-histidine: step 3/3. Functionally, catalyzes the hydrolytic cleavage of the carbon-nitrogen bond in imidazolone-5-propanoate to yield N-formimidoyl-L-glutamate. It is the third step in the universal histidine degradation pathway. In Staphylococcus aureus (strain bovine RF122 / ET3-1), this protein is Imidazolonepropionase.